A 133-amino-acid polypeptide reads, in one-letter code: Nickel-responsive regulator (133 aa).

His76, His87, His89, and Cys95 together coordinate Ni(2+).

The protein belongs to the transcriptional regulatory CopG/NikR family. Homotetramer. It depends on Ni(2+) as a cofactor.

In terms of biological role, transcriptional repressor of the nikABCDE operon. Is active in the presence of excessive concentrations of intracellular nickel. This is Nickel-responsive regulator from Salmonella paratyphi A (strain ATCC 9150 / SARB42).